We begin with the raw amino-acid sequence, 141 residues long: Large ribosomal subunit protein uL11 (141 aa).

This sequence belongs to the universal ribosomal protein uL11 family. Part of the ribosomal stalk of the 50S ribosomal subunit. Interacts with L10 and the large rRNA to form the base of the stalk. L10 forms an elongated spine to which L12 dimers bind in a sequential fashion forming a multimeric L10(L12)X complex. In terms of processing, one or more lysine residues are methylated.

In terms of biological role, forms part of the ribosomal stalk which helps the ribosome interact with GTP-bound translation factors. The sequence is that of Large ribosomal subunit protein uL11 from Campylobacter fetus subsp. fetus (strain 82-40).